A 97-amino-acid polypeptide reads, in one-letter code: Citrate lyase acyl carrier protein (97 aa).

Ser-14 bears the O-(phosphoribosyl dephospho-coenzyme A)serine mark.

It belongs to the CitD family. Oligomer with a subunit composition of (alpha,beta,gamma)6.

It localises to the cytoplasm. Its function is as follows. Covalent carrier of the coenzyme of citrate lyase. This Escherichia fergusonii (strain ATCC 35469 / DSM 13698 / CCUG 18766 / IAM 14443 / JCM 21226 / LMG 7866 / NBRC 102419 / NCTC 12128 / CDC 0568-73) protein is Citrate lyase acyl carrier protein.